A 662-amino-acid chain; its full sequence is MIFIMKLKNLLPIFCFFLVSFSISSAQKCGKTGLFKPNDKYDINRHLLLSSLASNVSARGGFYNASIGQGPDRLYASGTCIQGSEPELCSACIDSAFIRVIKKCHNQTEALDWSSFNEEYPCMIRYSNRSFFGLLEMTPFFKNYNATDFQVNLTEFYQKWEALMLGVIADAISSPNPKFYGAGTGKIGIQTVYAFVLCSKDISPWNCSRCLRGNVDNYKLSCSGKPRGHSFSPSCYMRWDLYQFYGFIEYRASPTLPREKGRISELSDDGGKISTRNILGITVALAFFITVLLVLGYALSRRRKAYQEFATENDITTSGSLQFDFKAIEAATNNFQKSNKLGHGGFGEVFKGTFPNGTEVAVKRLSKISGQGEEEFKNEVLLVAKLQHRNLVRLLGFSVEGEEKILVYEYMPNKSLDYFLFDHRRRGQLDWRTRYNIIRGVTRGILYLHQDSRLTIIHRDLKAGNILLDVDMNPKIADFGVARNFRVDQTEATTGRVVGTFGYMPPEYVANGQFSMKSDVYSFGVLILEIIVGKKSSSFHEIDGSVGNLVTYVWRLWNNESFLELVDPAMGESYDKDEVIRCIHISLLCVQENPADRPTMSTVFQMLTNTFLTLPVPQLPGFVFRVRSEPNPLAERLEPGPSTTMSFACSIDDASITSVDLR.

A signal peptide spans 1–26; sequence MIFIMKLKNLLPIFCFFLVSFSISSA. 2 Gnk2-homologous domains span residues 27–131 and 137–244; these read QKCG…NRSF and MTPF…LYQF. The Extracellular portion of the chain corresponds to 27–277; it reads QKCGKTGLFK…DDGGKISTRN (251 aa). Residues asparagine 55, asparagine 64, asparagine 106, asparagine 128, asparagine 145, asparagine 152, and asparagine 206 are each glycosylated (N-linked (GlcNAc...) asparagine). Residues 278–298 form a helical membrane-spanning segment; sequence ILGITVALAFFITVLLVLGYA. At 299 to 662 the chain is on the cytoplasmic side; that stretch reads LSRRRKAYQE…DASITSVDLR (364 aa). One can recognise a Protein kinase domain in the interval 335-612; it reads FQKSNKLGHG…VFQMLTNTFL (278 aa). ATP-binding positions include 341 to 349 and lysine 363; that span reads LGHGGFGEV. Aspartate 460 acts as the Proton acceptor in catalysis.

This sequence belongs to the protein kinase superfamily. Ser/Thr protein kinase family. CRK subfamily.

Its subcellular location is the membrane. The enzyme catalyses L-seryl-[protein] + ATP = O-phospho-L-seryl-[protein] + ADP + H(+). The catalysed reaction is L-threonyl-[protein] + ATP = O-phospho-L-threonyl-[protein] + ADP + H(+). This Arabidopsis thaliana (Mouse-ear cress) protein is Putative cysteine-rich receptor-like protein kinase 16 (CRK16).